Reading from the N-terminus, the 186-residue chain is Putative manganese efflux pump MntP (186 aa).

Helical transmembrane passes span 3–23, 39–59, 65–85, 109–129, 133–153, and 166–186; these read PIAL…AAIG, IGII…LIGK, VEAW…LHMI, CLTA…LAFI, IWIA…IGIM, and AEIF…YGQL.

It belongs to the MntP (TC 9.B.29) family.

The protein localises to the cell inner membrane. In terms of biological role, probably functions as a manganese efflux pump. This Alcanivorax borkumensis (strain ATCC 700651 / DSM 11573 / NCIMB 13689 / SK2) protein is Putative manganese efflux pump MntP.